The primary structure comprises 679 residues: Glycine--tRNA ligase beta subunit (679 aa).

Belongs to the class-II aminoacyl-tRNA synthetase family. As to quaternary structure, tetramer of two alpha and two beta subunits.

It is found in the cytoplasm. It carries out the reaction tRNA(Gly) + glycine + ATP = glycyl-tRNA(Gly) + AMP + diphosphate. In Streptococcus pyogenes serotype M3 (strain ATCC BAA-595 / MGAS315), this protein is Glycine--tRNA ligase beta subunit.